The primary structure comprises 131 residues: Olfactory receptor-like protein COR9 (131 aa).

At 1-16 (VAICSPLLYSTVMTKR) the chain is on the cytoplasmic side. A helical transmembrane segment spans residues 17–41 (VCMQLVVGSYMGGLLNSLTHTCGLL). Residues 42–82 (GLPFCGPNVINHYFCDIPPLLQLACSDTHRNETLLLAFSAV) lie on the Extracellular side of the membrane. Asn-72 carries an N-linked (GlcNAc...) asparagine glycan. A helical membrane pass occupies residues 83-103 (IALFTLFVITASYMLILSVIL). Residues 104-116 (KIQSDDGRKKTFH) lie on the Cytoplasmic side of the membrane. Residues 117–131 (TCASHLTAITIFFGS) form a helical membrane-spanning segment.

The protein belongs to the G-protein coupled receptor 1 family.

Its subcellular location is the cell membrane. Its function is as follows. Odorant receptor. The protein is Olfactory receptor-like protein COR9 (COR9) of Gallus gallus (Chicken).